Here is a 105-residue protein sequence, read N- to C-terminus: Cuticle protein AMP1B (105 aa).

A disordered region spans residues 1–21 (DRDAQTLTDERSDQGDGNFRY). One can recognise a Chitin-binding type R&amp;R domain in the interval 16-81 (DGNFRYEFET…PSSDLLPVPP (66 aa)).

As to expression, arthrodial membrane.

This Homarus americanus (American lobster) protein is Cuticle protein AMP1B.